A 236-amino-acid polypeptide reads, in one-letter code: MLKLEKITYLYDHLPMCFDLRIQPGERVAILGPSGAGKSTLLSLIAGFLAPTGGHMLLNNQDHTASTPAQRPVSMLFQENNLFAHLTVEQNIGLGLHPGLKLSGEQRLLLQHIAQQVGLESCLDRLPAQLSGGQRQRAALARCLVRSQPILLLDEPFSALDPALRNEMLQLVDQVCINRQLTLLMVSHNLDDAARIAQRTLLIVEGRIDYDGPTQALVDGSAAKASVLGIKSAVIS.

An ABC transporter domain is found at 2 to 230 (LKLEKITYLY…SAAKASVLGI (229 aa)). Residue 32-39 (GPSGAGKS) coordinates ATP.

The protein belongs to the ABC transporter superfamily. Thiamine importer (TC 3.A.1.19.1) family. In terms of assembly, the complex is composed of two ATP-binding proteins (ThiQ), two transmembrane proteins (ThiP) and a solute-binding protein (ThiB).

The protein localises to the cell inner membrane. It catalyses the reaction thiamine(out) + ATP + H2O = thiamine(in) + ADP + phosphate + H(+). Part of the ABC transporter complex ThiBPQ involved in thiamine import. Responsible for energy coupling to the transport system. The chain is Thiamine import ATP-binding protein ThiQ from Yersinia pestis bv. Antiqua (strain Antiqua).